The sequence spans 364 residues: MTLWTIKIGTSLLRGNKEFSTNKIIETYCGFIAESKAKGDQVIIVSSGAVGLGCNRLGLKVRPNDLNSLQAAAAVGQGYLMSLYESAMKKYGYNVAQILLTRSDFESKRCFKNASLTIKKLLDWKVLPIINENDSIANEELRYGDNDTLSALVSTAISADQLVLLTDIDKLYSSDPKFDKDAKPITDVHSSNEIIQIQSNSNESNNWGTGGIKTKLTAAQIATKNGITVHLADGREPKILKDILKGSRGGTVFHPNPKPIGTMKSWLAHALYPQGTLHVDDGAYNAIQNKGASLLIVGIINIDGDFAKNQPVKIVNLEGIEIAKGISSISSESIRRFINNRIKSTQYPVVVHRDVLVLSSELLI.

An ATP-binding site is contributed by Lys-7. Substrate-binding residues include Ser-47, Asp-134, and Asn-146. Residues 166–167 (TD) and 209–215 (TGGIKTK) contribute to the ATP site. In terms of domain architecture, PUA spans 274–349 (QGTLHVDDGA…NRIKSTQYPV (76 aa)).

The protein belongs to the glutamate 5-kinase family.

The protein localises to the cytoplasm. The enzyme catalyses L-glutamate + ATP = L-glutamyl 5-phosphate + ADP. It participates in amino-acid biosynthesis; L-proline biosynthesis; L-glutamate 5-semialdehyde from L-glutamate: step 1/2. In terms of biological role, catalyzes the transfer of a phosphate group to glutamate to form L-glutamate 5-phosphate. This is Glutamate 5-kinase from Prochlorococcus marinus (strain SARG / CCMP1375 / SS120).